Consider the following 196-residue polypeptide: dTDP-4-dehydro-6-deoxyglucose 3-epimerase (196 aa).

Substrate is bound by residues arginine 21, glutamate 26, glutamine 45–asparagine 47, and arginine 57. Histidine 60 (proton acceptor) is an active-site residue. Substrate-binding residues include lysine 70 and arginine 117. Tyrosine 130 acts as the Proton donor in catalysis. Substrate is bound by residues glutamate 141 and arginine 166.

This sequence belongs to the dTDP-4-dehydrorhamnose 3,5-epimerase family. In terms of assembly, homodimer.

The catalysed reaction is dTDP-4-dehydro-6-deoxy-alpha-D-glucose = dTDP-4-dehydro-6-deoxy-alpha-D-allose. It functions in the pathway antibiotic biosynthesis. In terms of biological role, involved in the biosynthesis of dTDP-6-deoxy-D-allose, an intermediate in the biosynthesis of mycinose, which is one of the two unusual sugars attached to the 16-membered macrolactone ring of the aglycone antibiotic dihydrochalcomycin (GERI-155). Catalyzes the conversion of dTDP-4-oxo-6-deoxyglucose to dTDP-4-oxo-6-deoxyallose, via a C-3 epimerization. This Streptomyces sp protein is dTDP-4-dehydro-6-deoxyglucose 3-epimerase.